Reading from the N-terminus, the 157-residue chain is Arginine repressor (157 aa).

Belongs to the ArgR family.

The protein localises to the cytoplasm. It functions in the pathway amino-acid biosynthesis; L-arginine biosynthesis [regulation]. In terms of biological role, regulates arginine biosynthesis genes. The polypeptide is Arginine repressor (Bacteroides fragilis (strain ATCC 25285 / DSM 2151 / CCUG 4856 / JCM 11019 / LMG 10263 / NCTC 9343 / Onslow / VPI 2553 / EN-2)).